A 521-amino-acid polypeptide reads, in one-letter code: Vang-like protein 2 (521 aa).

Residues 1-81 (MDTESQYSGY…TTVVTGTSEH (81 aa)) form a disordered region. At 1–108 (MDTESQYSGY…VPLDCSRHLG (108 aa)) the chain is on the cytoplasmic side. Residues 15-33 (GHSRSSRKHRDRRDRHRSK) are compositionally biased toward basic residues. Residues 57–67 (ESTRGDERDDN) are compositionally biased toward basic and acidic residues. Residues 69–81 (GETTTVVTGTSEH) are compositionally biased toward low complexity. The chain crosses the membrane as a helical span at residues 109-129 (VAAGAILALLSFLTPLAFLLL). The Extracellular portion of the chain corresponds to 130-147 (PPLLWREELEPCGTACEG). A helical transmembrane segment spans residues 148 to 168 (LFISVAFKLLILLLGSWALFF). Residues 169-178 (RRPKASLPRV) are Cytoplasmic-facing. A helical transmembrane segment spans residues 179–199 (FVLRALLMVLVFLLVISYWLF). Residues 200–217 (YGVRILDARERSYQGVVQ) are Extracellular-facing. The chain crosses the membrane as a helical span at residues 218 to 238 (FAVSLVDALLFVHYLAVVLLE). At 239 to 521 (LRQLQPQFTL…VMRLQSETSV (283 aa)) the chain is on the cytoplasmic side.

It belongs to the Vang family. In terms of assembly, homodimer and heterodimer with Vangl1. Interacts through its C-terminal region with the N-terminal half of DVL1, DVL2 and DVL3. The PDZ domain of DVL1, DVL2 and DVL3 is required for the interaction. Variants Glu-255 and Asn-464 impair interaction with the DVL proteins. Also interacts with the PDZ domains of MAGI3, SCRIB/SCRB1 and FZD3. Interacts with PRICKLE3. In terms of tissue distribution, primarily expressed in the brain and epididymis. Not detected in the cochlea of Lp mice.

It is found in the cell membrane. Functionally, involved in the control of early morphogenesis and patterning of both axial midline structures and the development of neural plate. Plays a role in the regulation of planar cell polarity, particularly in the orientation of stereociliary bundles in the cochlea. Required for polarization and movement of myocardializing cells in the outflow tract and seems to act via RHOA signaling to regulate this process. Required for cell surface localization of FZD3 and FZD6 in the inner ear. This Mus musculus (Mouse) protein is Vang-like protein 2 (Vangl2).